Here is a 314-residue protein sequence, read N- to C-terminus: Methionyl-tRNA formyltransferase (314 aa).

112–115 contacts (6S)-5,6,7,8-tetrahydrofolate; that stretch reads SLLP.

Belongs to the Fmt family.

It catalyses the reaction L-methionyl-tRNA(fMet) + (6R)-10-formyltetrahydrofolate = N-formyl-L-methionyl-tRNA(fMet) + (6S)-5,6,7,8-tetrahydrofolate + H(+). Attaches a formyl group to the free amino group of methionyl-tRNA(fMet). The formyl group appears to play a dual role in the initiator identity of N-formylmethionyl-tRNA by promoting its recognition by IF2 and preventing the misappropriation of this tRNA by the elongation apparatus. This Buchnera aphidicola subsp. Acyrthosiphon pisum (strain 5A) protein is Methionyl-tRNA formyltransferase.